The sequence spans 61 residues: MVCIHTENQNQGGFYPFVLLEISVLHEPPLGHLRYRLTDVPPQPNSPPDNVFNPDQPRMGP.

Residues 36–61 (RLTDVPPQPNSPPDNVFNPDQPRMGP) form a disordered region.

The protein belongs to the ART2/RRT15 family.

This is an uncharacterized protein from Saccharomyces cerevisiae (strain ATCC 204508 / S288c) (Baker's yeast).